Here is a 401-residue protein sequence, read N- to C-terminus: Argininosuccinate synthase (401 aa).

Position 8–16 (8–16 (AYSGGLDTS)) interacts with ATP. Tyr87 serves as a coordination point for L-citrulline. An ATP-binding site is contributed by Gly117. Positions 119, 123, and 124 each coordinate L-aspartate. Residue Asn123 coordinates L-citrulline. Positions 127, 175, 259, and 271 each coordinate L-citrulline.

It belongs to the argininosuccinate synthase family. Type 1 subfamily. As to quaternary structure, homotetramer.

It localises to the cytoplasm. It carries out the reaction L-citrulline + L-aspartate + ATP = 2-(N(omega)-L-arginino)succinate + AMP + diphosphate + H(+). Its pathway is amino-acid biosynthesis; L-arginine biosynthesis; L-arginine from L-ornithine and carbamoyl phosphate: step 2/3. This Paenarthrobacter aurescens (strain TC1) protein is Argininosuccinate synthase.